A 459-amino-acid chain; its full sequence is Argininosuccinate lyase (459 aa).

Positions 440–459 (DEKKLEELRQNENRDNVYNP) are disordered.

It belongs to the lyase 1 family. Argininosuccinate lyase subfamily.

Its subcellular location is the cytoplasm. It catalyses the reaction 2-(N(omega)-L-arginino)succinate = fumarate + L-arginine. It functions in the pathway amino-acid biosynthesis; L-arginine biosynthesis; L-arginine from L-ornithine and carbamoyl phosphate: step 3/3. In Pyrococcus furiosus (strain ATCC 43587 / DSM 3638 / JCM 8422 / Vc1), this protein is Argininosuccinate lyase.